Reading from the N-terminus, the 4450-residue chain is Gramicidin S synthase 2 (4450 aa).

Residues 467–1044 (DKTIHQLFTE…IQEISNYING (578 aa)) form a domain 1 (proline-activating) region. Carrier domains lie at 971-1046 (VPTN…NGAK), 2006-2081 (APSS…ADGE), 3051-3126 (APRT…EETD), and 4089-4164 (APRN…THQE). S1006, S2041, S3086, and S4124 each carry O-(pantetheine 4'-phosphoryl)serine. The domain 2 (valine-activating) stretch occupies residues 1521–2080 (DHVAVGWKDQ…SALAQYIADG (560 aa)). The domain 3 (ornithine-activating) stretch occupies residues 2538–3134 (YATNKIFHEL…TDTEQYMAIQ (597 aa)). A domain 4 (leucine-activating) region spans residues 3590 to 4172 (IQELFEEQVK…QESENNVHQP (583 aa)).

This sequence belongs to the ATP-dependent AMP-binding enzyme family. Large multienzyme complex of GrsA and GrsB. It depends on pantetheine 4'-phosphate as a cofactor.

Its pathway is antibiotic biosynthesis; gramicidin S biosynthesis. In terms of biological role, this protein is a multifunctional enzyme, able to activate and polymerize the amino acids Pro, Val, Orn and Leu. Activation sites for these AA consist of individual domains. The chain is Gramicidin S synthase 2 (grsB) from Brevibacillus brevis (Bacillus brevis).